The chain runs to 70 residues: Probable non-specific lipid-transfer protein 2 (70 aa).

4 cysteine pairs are disulfide-bonded: C4–C38, C12–C26, C27–C62, and C36–C69.

Functionally, potential phospholipid transfer protein. The polypeptide is Probable non-specific lipid-transfer protein 2 (Zea mays (Maize)).